We begin with the raw amino-acid sequence, 842 residues long: Elongation factor 2 (842 aa).

A tr-type G domain is found at 17–346 (ANVRNMSVIA…MIVLHLPSPV (330 aa)). GTP contacts are provided by residues 26-33 (AHVDHGKS), 158-161 (NKVD), and 213-215 (SGL). Residue H699 is modified to Diphthamide.

It belongs to the TRAFAC class translation factor GTPase superfamily. Classic translation factor GTPase family. EF-G/EF-2 subfamily.

The protein resides in the cytoplasm. It catalyses the reaction GTP + H2O = GDP + phosphate + H(+). It participates in protein biosynthesis; polypeptide chain elongation. Functionally, catalyzes the GTP-dependent ribosomal translocation step during translation elongation. During this step, the ribosome changes from the pre-translocational (PRE) to the post-translocational (POST) state as the newly formed A-site-bound peptidyl-tRNA and P-site-bound deacylated tRNA move to the P and E sites, respectively. Catalyzes the coordinated movement of the two tRNA molecules, the mRNA and conformational changes in the ribosome. The protein is Elongation factor 2 (EFT2) of Meyerozyma guilliermondii (strain ATCC 6260 / CBS 566 / DSM 6381 / JCM 1539 / NBRC 10279 / NRRL Y-324) (Yeast).